The chain runs to 1453 residues: NRPS-like tryptophan epimerase fscC (1453 aa).

Positions Ser-37–Val-433 are adenylation. The Carrier domain occupies Thr-544–Thr-626. Ser-586 carries the O-(pantetheine 4'-phosphoryl)serine modification. Residues Phe-639–Phe-1053 are epimerization (E) domain. Residues Phe-1181 to Gln-1391 form a condensation region.

The protein belongs to the NRP synthetase family. Pantetheine 4'-phosphate serves as cofactor.

It participates in secondary metabolite biosynthesis. Functionally, NRPS-like tryptophan epimerase; part of the fragmented gene cluster that mediates the biosynthesis of fusarochromene, a tryptophan-derived metabolite closely related to a group of mycotoxins including fusarochromanone. Within the pathway, fscC catalyzes the first step via epimerization of L-tryptophan to provide the intermediate D-tryptophan. D-tryptophan is subsequently hydroxylated by the tryptophan 6-hydroxylase fscE to yield 6-hydroxytryptophan. The pyrrole ring undergoes cleavaged by the tryptophan 2,3-dioxygenase fscD and is finally converted to 4-hydroxykyrunenine by the hydrolase fscH. The NRPS-like oxidoreductase fscA reduces the carboxyl group to primary alcohol and the DMATS-type prenyltransferase fscG performs prenylation, followed by the formation of a chromene ring catalyzed by the oxidoreductase fscI, which leads to desacetylfusarochromene. Epoxidation by fscF and rearrangement reactions of chromene double bonds convert compound desacetylfusarochromene to fusarochromanones. Although specific acetyltransferases were not found near the fsc gene cluster, several predicted enzymes containing the N-acetyltransferase superfamily domain are present in the genome of F.equiseti. These predicted enzymes may have the potential to convert desacetylfusarochromene to fusarochromene. In Fusarium equiseti (Fusarium scirpi), this protein is NRPS-like tryptophan epimerase fscC.